The primary structure comprises 1863 residues: Breast cancer type 1 susceptibility protein homolog (1863 aa).

Met-1 carries the post-translational modification N-acetylmethionine. The segment at 24–65 (CPICLELIKEPVSTKCDHIFCKFCMLKLLNQKKGPSQCPLCK) adopts an RING-type zinc-finger fold. A Glycyl lysine isopeptide (Lys-Gly) (interchain with G-Cter in SUMO2) cross-link involves residue Lys-109. Ser-114 is modified (phosphoserine). Residues 231 to 267 (TDVTNTEHHQPSNNDLNTTEKRATERHPEKYQGSSVS) are disordered. Positions 248–260 (TTEKRATERHPEK) are enriched in basic and acidic residues. A Glycyl lysine isopeptide (Lys-Gly) (interchain with G-Cter in SUMO2) cross-link involves residue Lys-301. Positions 306–338 (NKSKQPGLARSQHNRWAGSKETCNDRQTPSTEK) are disordered. Residue Lys-339 forms a Glycyl lysine isopeptide (Lys-Gly) (interchain with G-Cter in SUMO2) linkage. Phosphoserine occurs at positions 395, 398, 423, and 434. Residues Lys-443, Lys-459, and Lys-519 each participate in a glycyl lysine isopeptide (Lys-Gly) (interchain with G-Cter in SUMO2) cross-link. The residue at position 551 (Ser-551) is a Phosphoserine. Glycyl lysine isopeptide (Lys-Gly) (interchain with G-Cter in SUMO2) cross-links involve residues Lys-583 and Lys-654. Positions 650 to 735 (IKKKKYNQMP…LPREEKEEKL (86 aa)) are disordered. Phosphoserine is present on residues Ser-694, Ser-708, and Ser-725. Polar residues predominate over residues 705-716 (APGSFTNCSNTS). Residues Lys-734 and Lys-739 each participate in a glycyl lysine isopeptide (Lys-Gly) (interchain with G-Cter in SUMO2) cross-link. Phosphoserine occurs at positions 753 and 840. Glycyl lysine isopeptide (Lys-Gly) (interchain with G-Cter in SUMO2) cross-links involve residues Lys-918 and Lys-987. Position 988 is a phosphoserine; by CHEK2 (Ser-988). Ser-1009 carries the post-translational modification Phosphoserine. The tract at residues 1045-1066 (NEVGSSTNEVGSSINEVGSSDE) is disordered. Lys-1079 is covalently cross-linked (Glycyl lysine isopeptide (Lys-Gly) (interchain with G-Cter in SUMO2)). Phosphoserine occurs at positions 1143, 1189, 1191, 1211, 1217, 1218, 1280, 1328, 1336, 1342, and 1387. The interval 1181-1216 (VQRGELSRSPSPFTHTHLAQGYRRGAKKLESSEENL) is disordered. The interval 1322-1394 (KQMRHQSESQ…LSSQSDILTT (73 aa)) is disordered. A compositionally biased stretch (acidic residues) spans 1342 to 1360 (SDDEERGTDLEENNQEEQG). Over residues 1373–1394 (ESETSVSEDCSGLSSQSDILTT) the composition is skewed to polar residues. At Thr-1394 the chain carries Phosphothreonine. Residues 1397-1424 (RDTMQDNLIKLQQEMAELEAVLEQHGSQ) form an interaction with PALB2 region. Phosphoserine is present on residues Ser-1423, Ser-1457, Ser-1524, and Ser-1542. Positions 1440 to 1504 (EDLRNPEQST…RSSPSKCPSL (65 aa)) are disordered. Over residues 1445–1470 (PEQSTSEKAVLTSQKSSEYPISQNPE) the composition is skewed to polar residues. Disordered regions lie at residues 1540 to 1597 (EESG…PSST) and 1610 to 1642 (SAQS…LTAS). A compositionally biased stretch (polar residues) spans 1610–1624 (SAQSPAAAQTTNTAG). 2 consecutive BRCT domains span residues 1642 to 1736 (STER…DFEV) and 1756 to 1855 (QDRK…TYLI).

Heterodimer with BARD1. Part of the BRCA1-associated genome surveillance complex (BASC), which contains BRCA1, MSH2, MSH6, MLH1, ATM, BLM, PMS2 and the MRE11-RAD50-NBN protein (MRN) complex. This association could be a dynamic process changing throughout the cell cycle and within subnuclear domains. Component of the BRCA1-A complex, at least composed of BRCA1, BARD1, UIMC1/RAP80, ABRAXAS1, BRCC3/BRCC36, BABAM2 and BABAM1/NBA1. Interacts (via the BRCT domains) with ABRAXAS1 (phosphorylated form); this is important for recruitment to sites of DNA damage. Can form a heterotetramer with two molecules of ABRAXAS1 (phosphorylated form). Component of the BRCA1-RBBP8 complex. Interacts (via the BRCT domains) with RBBP8 ('Ser-327' phosphorylated form); the interaction ubiquitinates RBBP8, regulates CHEK1 activation, and involves RBBP8 in BRCA1-dependent G2/M checkpoint control on DNA damage. Associates with RNA polymerase II holoenzyme. Interacts with SMC1A, NELFB, DCLRE1C, CLSPN. CHEK1, CHEK2, BAP1, BRCC3, UBXN1 and PCLAF. Interacts (via BRCT domains) with BRIP1 (phosphorylated form). Interacts with FANCD2 (ubiquitinated form). Interacts with H2AX (phosphorylated on 'Ser-140'). Interacts (via the BRCT domains) with ACACA (phosphorylated form); the interaction prevents dephosphorylation of ACACA. Part of a BRCA complex containing BRCA1, BRCA2 and PALB2. Interacts directly with PALB2; the interaction is essential for its function in HRR. Interacts directly with BRCA2; the interaction occurs only in the presence of PALB2 which serves as the bridging protein. Interacts (via the BRCT domains) with LMO4; the interaction represses the transcriptional activity of BRCA1. Interacts (via the BRCT domains) with CCAR2 (via N-terminus); the interaction represses the transcriptional activator activity of BRCA1. Interacts with EXD2. Interacts (via C-terminus) with DHX9; this interaction is direct and links BRCA1 to the RNA polymerase II holoenzyme. Interacts with DNA helicase ZGRF1; the interaction is increased following DNA damage induction. Phosphorylated in response to IR, UV, and various stimuli that cause checkpoint activation, probably by ATM or ATR. Phosphorylation at Ser-988 by CHEK2 regulates mitotic spindle assembly. Phosphorylation by AURKA regulates centrosomal microtubule nucleation. Post-translationally, autoubiquitinated, undergoes 'Lys-6'-linked polyubiquitination. 'Lys-6'-linked polyubiquitination does not promote degradation.

The protein resides in the nucleus. It localises to the chromosome. The protein localises to the cytoplasm. The catalysed reaction is S-ubiquitinyl-[E2 ubiquitin-conjugating enzyme]-L-cysteine + [acceptor protein]-L-lysine = [E2 ubiquitin-conjugating enzyme]-L-cysteine + N(6)-ubiquitinyl-[acceptor protein]-L-lysine.. Its pathway is protein modification; protein ubiquitination. In terms of biological role, E3 ubiquitin-protein ligase that specifically mediates the formation of 'Lys-6'-linked polyubiquitin chains and plays a central role in DNA repair by facilitating cellular responses to DNA damage. It is unclear whether it also mediates the formation of other types of polyubiquitin chains. The BRCA1-BARD1 heterodimer coordinates a diverse range of cellular pathways such as DNA damage repair, ubiquitination and transcriptional regulation to maintain genomic stability. Regulates centrosomal microtubule nucleation. Required for appropriate cell cycle arrests after ionizing irradiation in both the S-phase and the G2 phase of the cell cycle. Required for FANCD2 targeting to sites of DNA damage. Inhibits lipid synthesis by binding to inactive phosphorylated ACACA and preventing its dephosphorylation. Contributes to homologous recombination repair (HRR) via its direct interaction with PALB2, fine-tunes recombinational repair partly through its modulatory role in the PALB2-dependent loading of BRCA2-RAD51 repair machinery at DNA breaks. Component of the BRCA1-RBBP8 complex which regulates CHEK1 activation and controls cell cycle G2/M checkpoints on DNA damage via BRCA1-mediated ubiquitination of RBBP8. Acts as a transcriptional activator. This is Breast cancer type 1 susceptibility protein homolog (BRCA1) from Pongo pygmaeus (Bornean orangutan).